We begin with the raw amino-acid sequence, 592 residues long: Thiol:disulfide interchange protein DsbD (592 aa).

The first 19 residues, 1 to 19 (MKLIASFSIFMLMSIWSFA), serve as a signal peptide directing secretion. 2 cysteine pairs are disulfide-bonded: Cys-130/Cys-136 and Cys-204/Cys-326. A run of 8 helical transmembrane segments spans residues 186–206 (IWVL…PCVF), 229–249 (FVLS…LGLV), 265–285 (IILG…FGAW), 318–338 (ISGL…LLYI), 345–365 (LLGF…LILF), 379–399 (WMNI…LMFV), 406–426 (MATD…FYVM), and 440–460 (ALVI…TIFG). In terms of domain architecture, Thioredoxin spans 443 to 592 (IFIGLFASAM…AFAAHAKNIL (150 aa)). Cys-508 and Cys-511 form a disulfide bridge.

The protein belongs to the thioredoxin family. DsbD subfamily.

The protein localises to the cell inner membrane. It carries out the reaction [protein]-dithiol + NAD(+) = [protein]-disulfide + NADH + H(+). The enzyme catalyses [protein]-dithiol + NADP(+) = [protein]-disulfide + NADPH + H(+). Functionally, required to facilitate the formation of correct disulfide bonds in some periplasmic proteins and for the assembly of the periplasmic c-type cytochromes. Acts by transferring electrons from cytoplasmic thioredoxin to the periplasm. This transfer involves a cascade of disulfide bond formation and reduction steps. The chain is Thiol:disulfide interchange protein DsbD from Pseudoalteromonas atlantica (strain T6c / ATCC BAA-1087).